Consider the following 69-residue polypeptide: Small ribosomal subunit protein uS14 (69 aa).

Residues Cys33, Cys36, Cys51, and Cys54 each coordinate Zn(2+).

The protein belongs to the universal ribosomal protein uS14 family. Zinc-binding uS14 subfamily. Part of the 30S ribosomal subunit. Zn(2+) is required as a cofactor.

Its function is as follows. Binds 16S rRNA, required for the assembly of 30S particles. In Nanoarchaeum equitans (strain Kin4-M), this protein is Small ribosomal subunit protein uS14.